Reading from the N-terminus, the 138-residue chain is Thyrotropin subunit beta (138 aa).

An N-terminal signal peptide occupies residues 1–20 (MTAIFLMSMLFGLACGQAMS). Intrachain disulfides connect C22/C72, C36/C87, C39/C125, C47/C103, C51/C105, and C108/C115. N43 carries an N-linked (GlcNAc...) asparagine glycan. The propeptide occupies 133–138 (VLEFSI).

Belongs to the glycoprotein hormones subunit beta family. In terms of assembly, heterodimer of a common alpha chain and a unique beta chain which confers biological specificity to thyrotropin, lutropin, follitropin and gonadotropin.

Its subcellular location is the secreted. Functionally, indispensable for the control of thyroid structure and metabolism. The protein is Thyrotropin subunit beta (TSHB) of Sus scrofa (Pig).